The chain runs to 411 residues: Na(+)-translocating NADH-quinone reductase subunit B (411 aa).

The next 3 membrane-spanning stretches (helical) occupy residues 56–76 (IMIT…YNAG), 121–141 (FLPI…LFAV), and 161–181 (ILPA…GVVI). Thr228 carries the FMN phosphoryl threonine modification. 5 helical membrane-spanning segments follow: residues 254 to 274 (FIPG…AAVL), 284 to 304 (IMLG…AIGS), 309 to 329 (MFGM…GMVF), 345 to 365 (LLFG…NPAF), and 368 to 388 (GIML…HFFV).

The protein belongs to the NqrB/RnfD family. In terms of assembly, composed of six subunits; NqrA, NqrB, NqrC, NqrD, NqrE and NqrF. Requires FMN as cofactor.

Its subcellular location is the cell inner membrane. The catalysed reaction is a ubiquinone + n Na(+)(in) + NADH + H(+) = a ubiquinol + n Na(+)(out) + NAD(+). Functionally, NQR complex catalyzes the reduction of ubiquinone-1 to ubiquinol by two successive reactions, coupled with the transport of Na(+) ions from the cytoplasm to the periplasm. NqrA to NqrE are probably involved in the second step, the conversion of ubisemiquinone to ubiquinol. The protein is Na(+)-translocating NADH-quinone reductase subunit B of Chromohalobacter salexigens (strain ATCC BAA-138 / DSM 3043 / CIP 106854 / NCIMB 13768 / 1H11).